Reading from the N-terminus, the 314-residue chain is Ecto-ADP-ribosyltransferase 4 (314 aa).

A signal peptide spans 1–46 (MGPLINRCKKILLPTTVPPATMRIWLLGGLLPFLLLLSGLQRPTEG). 2 disulfide bridges follow: C69–C280 and C182–C231. One can recognise a TR mART core domain in the interval 91–276 (KNYFRMWQKA…LQLRSTGNLS (186 aa)). N114 carries N-linked (GlcNAc...) asparagine glycosylation. Y126 lines the NAD(+) pocket. Residue N178 is glycosylated (N-linked (GlcNAc...) asparagine). Q206 lines the NAD(+) pocket. A glycan (N-linked (GlcNAc...) asparagine) is linked at N222. S240 provides a ligand contact to NAD(+). N257 and N274 each carry an N-linked (GlcNAc...) asparagine glycan. Residue A285 is the site of GPI-anchor amidated alanine attachment. The propeptide at 286–314 (SSKKCIPDPIAIASLSFLTSVIIFSKSRV) is removed in mature form.

The protein belongs to the Arg-specific ADP-ribosyltransferase family. As to expression, expressed in spleen and T-cells.

It is found in the cell membrane. The enzyme catalyses L-arginyl-[protein] + NAD(+) = N(omega)-(ADP-D-ribosyl)-L-arginyl-[protein] + nicotinamide + H(+). The protein is Ecto-ADP-ribosyltransferase 4 (ART4) of Homo sapiens (Human).